We begin with the raw amino-acid sequence, 531 residues long: Polypyrimidine tract-binding protein 2 (531 aa).

At Met1 the chain carries N-acetylmethionine. 2 positions are modified to phosphoserine: Ser26 and Ser27. RRM domains lie at 59 to 133 and 181 to 257; these read RVLH…YSNH and LRII…FSKL. Ser308 carries the post-translational modification Phosphoserine. RRM domains lie at 338 to 412 and 455 to 529; these read TVLL…LSKH and ATLH…FSKS.

In terms of assembly, monomer. Interacts with NOVA1; the interaction is direct. Identified in a mRNP complex, at least composed of DHX9, DDX3X, ELAVL1, HNRNPU, IGF2BP1, ILF3, PABPC1, PCBP2, PTBP2, STAU1, STAU2, SYNCRIP and YBX1. Part of a ternary complex containing KHSRP and HNRPH1. Interacts with NOVA2; the interaction is direct.

The protein localises to the nucleus. RNA-binding protein which binds to intronic polypyrimidine tracts and mediates negative regulation of exons splicing. May antagonize in a tissue-specific manner the ability of NOVA1 to activate exon selection. In addition to its function in pre-mRNA splicing, plays also a role in the regulation of translation. The chain is Polypyrimidine tract-binding protein 2 from Rattus norvegicus (Rat).